Here is a 589-residue protein sequence, read N- to C-terminus: DNA ligase (589 aa).

Glu250 is an ATP binding site. Lys252 acts as the N6-AMP-lysine intermediate in catalysis. The ATP site is built by Arg257, Arg272, Glu302, Phe342, Arg417, and Lys423.

Belongs to the ATP-dependent DNA ligase family. It depends on Mg(2+) as a cofactor.

The enzyme catalyses ATP + (deoxyribonucleotide)n-3'-hydroxyl + 5'-phospho-(deoxyribonucleotide)m = (deoxyribonucleotide)n+m + AMP + diphosphate.. Its function is as follows. DNA ligase that seals nicks in double-stranded DNA during DNA replication, DNA recombination and DNA repair. This chain is DNA ligase, found in Cenarchaeum symbiosum (strain A).